We begin with the raw amino-acid sequence, 713 residues long: MKKQVKWLTSVSMSVGIALGAALPVWASPDTSVNNKLNFSTDTVYQIVTDRFVDGNSANNPTGAAFSSDHSNLKLYFGGDWQGITNKINDGYLTGMGITALWISQPVENITAVINYSGVNNTAYHGYWPRDFKKTNAAFGSFTDFSNLIAAAHSHNIKVVMDFAPNHTNPASSTDPSFAENGALYNNGTLLGKYSNDTAGLFHHNGGTDFSTTESGIYKNLYDLADINQNNNTIDSYLKESIQLWLNLGVDGIRFDAVKHMPQGWQKSYVSSIYSSANPVFTFGEWFLGPDEMTQDNINFANQSGMHLLDFAFAQEIREVFRDKSETMTDLNSVISSTGSSYNYINNMVTFIDNHDMDRFQQAGASTRPTEQALAVTLTSRGVPAIYYGTEQYMTGNGDPNNRGMMTGFDTNKTAYKVIKALAPLRKSNPALAYGSTTQRWVNSDVYVYERKFGSNVALVAVNRSSTTAYPISGALTALPNGTYTDVLGGLLNGNSITVNGGTVSNFTLAAGGTAVWQYTTTESSPIIGNVGPTMGKPGNTITIDGRGFGTTKNKVTFGTTAVTGANIVSWEDTEIKVKVPNVAAGNTAVTVTNAAGTTSAAFNNFNVLTADQVTVRFKVNNATTALGQNVYLTGNVAELGNWTAANAIGPMYNQVEASYPTWYFDVSVPANTALQFKFIKVNGSTVTWEGGNNHTFTSPSSGVATVTVDWQN.

A signal peptide spans 1–27 (MKKQVKWLTSVSMSVGIALGAALPVWA). The A1 stretch occupies residues 28–165 (SPDTSVNNKL…NIKVVMDFAP (138 aa)). Ca(2+) is bound by residues aspartate 54, asparagine 56, asparagine 59, asparagine 60, glycine 78, and aspartate 80. Position 127–128 (127–128 (YW)) interacts with substrate. Asparagine 166 serves as a coordination point for Ca(2+). The b stretch occupies residues 166–229 (NHTNPASSTD…NLYDLADINQ (64 aa)). Histidine 167 serves as a coordination point for substrate. Isoleucine 217 is a Ca(2+) binding site. Residue 220–223 (NLYD) participates in substrate binding. Residue aspartate 226 coordinates Ca(2+). The A2 stretch occupies residues 230-434 (NNNTIDSYLK…LRKSNPALAY (205 aa)). Arginine 254 lines the substrate pocket. The active-site Nucleophile is the aspartate 256. 259-260 (KH) is a substrate binding site. Histidine 260 provides a ligand contact to Ca(2+). The active-site Proton donor is the glutamate 285. Substrate-binding residues include histidine 355, aspartate 399, and arginine 403. Residues 435 to 522 (GSTTQRWVNS…GTAVWQYTTT (88 aa)) are c. The interval 523–609 (ESSPIIGNVG…SAAFNNFNVL (87 aa)) is d. The 81-residue stretch at 526 to 606 (PIIGNVGPTM…GTTSAAFNNF (81 aa)) folds into the IPT/TIG domain. Residues 608 to 713 (VLTADQVTVR…VATVTVDWQN (106 aa)) form the CBM20 domain. The interval 610–713 (TADQVTVRFK…VATVTVDWQN (104 aa)) is e.

It belongs to the glycosyl hydrolase 13 family. As to quaternary structure, monomer. The cofactor is Ca(2+).

The protein localises to the secreted. It catalyses the reaction Cyclizes part of a (1-&gt;4)-alpha-D-glucan chain by formation of a (1-&gt;4)-alpha-D-glucosidic bond.. This Paenibacillus macerans (Bacillus macerans) protein is Cyclomaltodextrin glucanotransferase.